A 448-amino-acid chain; its full sequence is Probable D-serine dehydratase (448 aa).

N6-(pyridoxal phosphate)lysine is present on lysine 119.

It belongs to the serine/threonine dehydratase family. DsdA subfamily. Pyridoxal 5'-phosphate is required as a cofactor.

The catalysed reaction is D-serine = pyruvate + NH4(+). This Chromobacterium violaceum (strain ATCC 12472 / DSM 30191 / JCM 1249 / CCUG 213 / NBRC 12614 / NCIMB 9131 / NCTC 9757 / MK) protein is Probable D-serine dehydratase.